Consider the following 784-residue polypeptide: Transcription factor E4F1 (784 aa).

The tract at residues 41 to 85 is required for ubiquitin ligase activity; sequence GFLGLPAPFSEEDEDDVHRCGRCQAEFTALEDFVQHKIQKACQRA. Residue S50 is modified to Phosphoserine. The interval 184-263 is mediates dimerization, DNA-binding, transcription repression of CCNA2 and interaction with HMGA2; that stretch reads LLVNKDGRYV…GKSFRESGAL (80 aa). 2 C2H2-type zinc fingers span residues 192–214 and 220–242; these read YVCA…MVTH and HECK…HRRH. The C2H2-type 3; degenerate zinc-finger motif lies at 248–272; that stretch reads YKCSKCGKSFRESGALTRHLKSLTP. The segment at 369 to 566 is mediates interaction with CDKN2A; that stretch reads NLLHQAMQNS…REKGSLVRHV (198 aa). 5 consecutive C2H2-type zinc fingers follow at residues 435–457, 463–485, 491–513, 519–541, and 547–569; these read HPCP…KRGH, FACA…QEVH, FRCG…RRVH, YPCP…FRTH, and HVCQ…VRHH. The interaction with BMI1 stretch occupies residues 435–599; that stretch reads HPCPQCSETF…LNRHLRTKGG (165 aa). The mediates interaction with TP53 stretch occupies residues 521–580; it reads CPKCGKRYKTKNAQQVHFRTHLEEKPHVCQFCSRGFREKGSLVRHVRHHTGEKPFKCYKC. The segment at 575–597 adopts a C2H2-type 9; degenerate zinc-finger fold; that stretch reads FKCYKCGRGFAEHGTLNRHLRTK. The segment at 575–597 is mediates interaction with RASSF1; the sequence is FKCYKCGRGFAEHGTLNRHLRTK.

Homodimer; binds DNA as a dimer. Forms a complex with CDKN2A and TP53. Interactions with TP53, RB1, ANP32A, BMI1 and FHL2 regulate E4F1 activity. Interacts with HDAC1, HMGA2 and RASSF1. In terms of assembly, (Microbial infection) Interacts with HBV protein X. Proteolytic cleavage produces a 50 kDa N-terminal peptide (p50E4F) which has a DNA-binding activity and activates transcription in presence of the adenoviral E1A protein. The major full-length protein (p120E4F) functions as a repressor of transcription. In terms of processing, phosphorylated; p120E4F and p50E4F are both phosphorylated. Phosphorylation is cell cycle-dependent and differentially regulates DNA-binding activity and function of both forms. Post-translationally, may be sumoylated by UBE2I upon interaction with CDKN2A. Ubiquitously expressed.

Its subcellular location is the nucleus. It is found in the nucleoplasm. The protein localises to the cytoplasm. It carries out the reaction S-ubiquitinyl-[E2 ubiquitin-conjugating enzyme]-L-cysteine + [acceptor protein]-L-lysine = [E2 ubiquitin-conjugating enzyme]-L-cysteine + N(6)-ubiquitinyl-[acceptor protein]-L-lysine.. It participates in protein modification; protein ubiquitination. Functionally, may function as a transcriptional repressor. May also function as a ubiquitin ligase mediating ubiquitination of chromatin-associated TP53. Functions in cell survival and proliferation through control of the cell cycle. Functions in the p53 and pRB tumor suppressor pathways and regulates the cyclin CCNA2 transcription. In terms of biological role, identified as a cellular target of the adenoviral oncoprotein E1A, it is required for both transcriptional activation and repression of viral genes. In Homo sapiens (Human), this protein is Transcription factor E4F1 (E4F1).